A 286-amino-acid chain; its full sequence is Polyamine aminopropyltransferase (286 aa).

Residues 5-238 (KTWHEKLYCH…GVMVFAWGTN (234 aa)) form the PABS domain. Spermidine is bound by residues H64 and D88. S-methyl-5'-thioadenosine contacts are provided by residues E108 and 140 to 141 (DG). The Proton acceptor role is filled by D158. 158 to 161 (DSTD) serves as a coordination point for spermidine.

This sequence belongs to the spermidine/spermine synthase family. As to quaternary structure, homodimer or homotetramer.

It localises to the cytoplasm. The enzyme catalyses S-adenosyl 3-(methylsulfanyl)propylamine + putrescine = S-methyl-5'-thioadenosine + spermidine + H(+). It participates in amine and polyamine biosynthesis; spermidine biosynthesis; spermidine from putrescine: step 1/1. Functionally, catalyzes the irreversible transfer of a propylamine group from the amino donor S-adenosylmethioninamine (decarboxy-AdoMet) to putrescine (1,4-diaminobutane) to yield spermidine. The chain is Polyamine aminopropyltransferase from Buchnera aphidicola subsp. Acyrthosiphon pisum (strain 5A).